The primary structure comprises 187 residues: Ion-translocating oxidoreductase complex subunit B (187 aa).

The segment at 1–23 (MIAAAASMSALGLGLGYLLGAAA) is hydrophobic. In terms of domain architecture, 4Fe-4S spans 29–88 (ETPPIVEEIAKILPGTNCGACGFPGCNGLAEAMAEGNAPVTACTPGGRDVALALAEIVTV). [4Fe-4S] cluster-binding residues include Cys46, Cys49, Cys54, Cys71, Cys112, Cys115, Cys118, Cys122, Cys142, Cys145, Cys148, and Cys152. 4Fe-4S ferredoxin-type domains lie at 103-132 (MVAF…GGAK) and 133-162 (QIHT…SRVK).

Belongs to the 4Fe4S bacterial-type ferredoxin family. RnfB subfamily. In terms of assembly, the complex is composed of six subunits: RnfA, RnfB, RnfC, RnfD, RnfE and RnfG. [4Fe-4S] cluster is required as a cofactor.

It is found in the cellular chromatophore membrane. Its function is as follows. Part of a membrane-bound complex that couples electron transfer with translocation of ions across the membrane. Required for nitrogen fixation. Involved in electron transfer to nitrogenase. This chain is Ion-translocating oxidoreductase complex subunit B, found in Rhodobacter capsulatus (Rhodopseudomonas capsulata).